A 48-amino-acid polypeptide reads, in one-letter code: MSENRHENEENRRDAAVAKVQNSGNAKVVVSVNTDQDQAQAQSQDGED.

Over residues 1-16 (MSENRHENEENRRDAA) the composition is skewed to basic and acidic residues. A disordered region spans residues 1-48 (MSENRHENEENRRDAAVAKVQNSGNAKVVVSVNTDQDQAQAQSQDGED). Over residues 35–48 (DQDQAQAQSQDGED) the composition is skewed to low complexity.

This Bacillus subtilis (strain 168) protein is Small, acid-soluble spore protein G (sspG).